The following is a 263-amino-acid chain: Phosphatidylglycerol--prolipoprotein diacylglyceryl transferase (263 aa).

4 helical membrane-spanning segments follow: residues 15-35 (ISIHWYAICIVSGLLLAVYLA), 52-72 (FILLAFPIAIVGARLYYVIFQ), 83-103 (IFAIWNGGIAIYGGLIAGAAV), and 112-132 (AIAVLDFLDIAAPGVMIAQSI). Arginine 134 lines the a 1,2-diacyl-sn-glycero-3-phospho-(1'-sn-glycerol) pocket. 3 helical membrane-spanning segments follow: residues 170–190 (VPTFLYESLWNLVGFSIILGL), 200–220 (GDVTSFYLIWYGLGRFVIEGM), and 227–247 (FVGLRVSQWVSISIIILGAVL).

This sequence belongs to the Lgt family.

It is found in the cell membrane. The catalysed reaction is L-cysteinyl-[prolipoprotein] + a 1,2-diacyl-sn-glycero-3-phospho-(1'-sn-glycerol) = an S-1,2-diacyl-sn-glyceryl-L-cysteinyl-[prolipoprotein] + sn-glycerol 1-phosphate + H(+). The protein operates within protein modification; lipoprotein biosynthesis (diacylglyceryl transfer). Functionally, catalyzes the transfer of the diacylglyceryl group from phosphatidylglycerol to the sulfhydryl group of the N-terminal cysteine of a prolipoprotein, the first step in the formation of mature lipoproteins. The chain is Phosphatidylglycerol--prolipoprotein diacylglyceryl transferase from Streptococcus thermophilus (strain ATCC BAA-491 / LMD-9).